A 279-amino-acid chain; its full sequence is Movement protein (279 aa).

The protein belongs to the cucumovirus movement protein family.

The protein localises to the host cell junction. Its subcellular location is the host plasmodesma. In terms of biological role, transports viral genome to neighboring plant cells directly through plasmosdesmata, without any budding. The movement protein allows efficient cell to cell propagation, by bypassing the host cell wall barrier. Acts by forming a tubular structure at the host plasmodesmata, enlarging it enough to allow free passage of virion capsids. This is Movement protein from Cucumber mosaic virus (strain Ixora) (CMV).